A 285-amino-acid polypeptide reads, in one-letter code: Sulfur carrier protein TtuD (285 aa).

2 Rhodanese domains span residues 20 to 127 and 161 to 281; these read EDPK…PLTT and KEGK…VPIA. A Cysteine persulfide modification is found at Cys240.

Cys-240 can accept a sulfur atom as persulfide forms from cysteine desulfurases IscS and SufS.

Its pathway is tRNA modification. Functionally, required for the efficient 2-thiolation of 5-methyluridine residue at position 54 in the T loop of tRNAs, leading to 5-methyl-2-thiouridine (m(5)s(2)U or s(2)T). TtuD is a sulfur carrier protein that has a role to direct sulfur flow from cysteine desulfurases to m(5)s(2)U synthesis in vivo. It enhances the cysteine desulfurase activity of IscS and SufS, as well as the formation of thiocarboxylated TtuB (TtuB-COSH) in the presence of these desulfurases. This Thermus thermophilus (strain ATCC BAA-163 / DSM 7039 / HB27) protein is Sulfur carrier protein TtuD.